The primary structure comprises 149 residues: Leghemoglobin (149 aa).

A Globin domain is found at 3–147; that stretch reads AFSEKQESLV…LAAAIKKAMG (145 aa). Tyrosine 31 carries the nitrated tyrosine modification. Serine 46 is a heme b binding site. Serine 46 is subject to Phosphoserine. Histidine 62 contributes to the O2 binding site. Heme b contacts are provided by lysine 65, histidine 94, and lysine 97. Tyrosine 135 is modified (nitrated tyrosine).

The protein belongs to the plant globin family. In terms of assembly, monomer. Post-translationally, nitrated in effective nodules and particularly in hypoxic conditions; this mechanism may play a protective role in the symbiosis by buffering toxic peroxynitrite NO(2)(-). Nitration level decrease during nodule senescence. Phosphorylation at Ser-46 disrupts the molecular environment of its porphyrin ring oxygen binding pocket, thus leading to a reduced oxygen consumption and to the delivery of oxygen O(2) to symbiosomes. As to expression, root nodules.

The protein localises to the cytoplasm. Its subcellular location is the cytosol. The protein resides in the nucleus. Leghemoglobin that reversibly binds oxygen O(2) through a pentacoordinated heme iron. In root nodules, facilitates the diffusion of oxygen to the bacteroids while preventing the bacterial nitrogenase from being inactivated by buffering dioxygen, nitric oxide and carbon monoxide, and promoting the formation of reactive oxygen species (ROS, e.g. H(2)O(2)). This role is essential for symbiotic nitrogen fixation (SNF). The protein is Leghemoglobin of Canavalia lineata (Beach bean).